The chain runs to 374 residues: MDGVGIVTTRFYEWSQCLHLESGAQLGSLTIAYETYGELNAAGNNAILVLHALTGNAHIAGRNFPDERYPGWWDPLVGPGRALDTRRYFIVCANVLGSCYGTTGPASINPATGKPYGMDFPAITIRDMVRAQKILLDYLGVKRLVAAIGGSMGGMQVLEWGFLYPQMLDAIIPIATCGRTTPMQIAFHHVQREAIYADPDWQGGNYYGTAGPRRGLALARQIGIITYKSDPSWNMKFGRNLVDPRKYFQLEGQFEVESYLAYQGRKLVDRFDANSYLYLTKAVDLHDVSQGRGSYNEVWRDFPCPCLGIGISSDFLFPPYQVQEIVRMINDGGGHARYAEIDSPYGHDAFLIEFNQLAAIIQPFLKELRPDLAA.

The AB hydrolase-1 domain occupies 45–353 (NAILVLHALT…PYGHDAFLIE (309 aa)). Ser-151 functions as the Nucleophile in the catalytic mechanism. Arg-220 contacts substrate. Residues Asp-314 and His-347 contribute to the active site. Asp-348 is a substrate binding site.

The protein belongs to the AB hydrolase superfamily. MetX family. As to quaternary structure, homodimer.

It localises to the cytoplasm. The catalysed reaction is L-homoserine + acetyl-CoA = O-acetyl-L-homoserine + CoA. It participates in amino-acid biosynthesis; L-methionine biosynthesis via de novo pathway; O-acetyl-L-homoserine from L-homoserine: step 1/1. In terms of biological role, transfers an acetyl group from acetyl-CoA to L-homoserine, forming acetyl-L-homoserine. This Moorella thermoacetica (strain ATCC 39073 / JCM 9320) protein is Homoserine O-acetyltransferase.